The chain runs to 406 residues: MEDTAKYLIHADFVVDGVVERSDVVGAAFGQTEGLLGDDLAIPDLQDSAKLGRIDVSVDSEGGQSFGDITIASSLDRVETATLAAALEAVERIGPCRADVEVDRIEDVRAAKRREVVDRAKELLATAFDEGAINADDILDEVRESVRVDDITDYDGYPAGPNVDSSDAVVIVEGRADVVTLLKYGIKNAVAVEGTNIPDAIAALSREKTATAFLDGDRGGDMILRELGQVGSLDFVARAPMGECVEDLSRRTVDSALRNKTPASAAAPIATTQSETAATDGSATPAPTPEPAPDTAPSPDSDGDDTEAAAPPTLAEHARAVADTETARLLDDALARIREVPAAEVVDAVADADSVPAVVVVDATITQRLLDVAAQRGVASLIGADTDEFVKQPLATRVRTLDDART.

In terms of domain architecture, Toprim spans Asp167–Val253. Residues Glu173, Asp215, and Asp217 each coordinate Mg(2+). The segment at Asn259 to Ala309 is disordered. Low complexity predominate over residues Thr261–Thr272. A compositionally biased stretch (pro residues) spans Ala286 to Ala296.

It belongs to the archaeal DnaG primase family. As to quaternary structure, forms a ternary complex with MCM helicase and DNA. It depends on Mg(2+) as a cofactor.

The enzyme catalyses ssDNA + n NTP = ssDNA/pppN(pN)n-1 hybrid + (n-1) diphosphate.. Its function is as follows. RNA polymerase that catalyzes the synthesis of short RNA molecules used as primers for DNA polymerase during DNA replication. The polypeptide is DNA primase DnaG (Halobacterium salinarum (strain ATCC 29341 / DSM 671 / R1)).